The sequence spans 378 residues: Cobalt-precorrin-5B C(1)-methyltransferase (378 aa).

This sequence belongs to the CbiD family.

The enzyme catalyses Co-precorrin-5B + S-adenosyl-L-methionine = Co-precorrin-6A + S-adenosyl-L-homocysteine. It participates in cofactor biosynthesis; adenosylcobalamin biosynthesis; cob(II)yrinate a,c-diamide from sirohydrochlorin (anaerobic route): step 6/10. Its function is as follows. Catalyzes the methylation of C-1 in cobalt-precorrin-5B to form cobalt-precorrin-6A. In Methanococcus aeolicus (strain ATCC BAA-1280 / DSM 17508 / OCM 812 / Nankai-3), this protein is Cobalt-precorrin-5B C(1)-methyltransferase.